A 119-amino-acid chain; its full sequence is Iron-sulfur cluster insertion protein ErpA (119 aa).

Iron-sulfur cluster is bound by residues Cys-47, Cys-111, and Cys-113.

It belongs to the HesB/IscA family. Homodimer. Iron-sulfur cluster is required as a cofactor.

Required for insertion of 4Fe-4S clusters for at least IspG. This is Iron-sulfur cluster insertion protein ErpA from Alcanivorax borkumensis (strain ATCC 700651 / DSM 11573 / NCIMB 13689 / SK2).